The following is a 305-amino-acid chain: Oxygen-dependent coproporphyrinogen-III oxidase (305 aa).

A substrate-binding site is contributed by serine 93. Residues histidine 97 and histidine 107 each contribute to the a divalent metal cation site. Residue histidine 107 is the Proton donor of the active site. A substrate-binding site is contributed by 109 to 111; sequence NVR. A divalent metal cation contacts are provided by histidine 146 and histidine 176. The tract at residues 241-276 is important for dimerization; sequence YVEFNLVFDRGTLFGLQSGGRTESILMSLPPQVRWG. A substrate-binding site is contributed by 259 to 261; that stretch reads GGR.

This sequence belongs to the aerobic coproporphyrinogen-III oxidase family. As to quaternary structure, homodimer. The cofactor is a divalent metal cation.

The protein localises to the cytoplasm. The catalysed reaction is coproporphyrinogen III + O2 + 2 H(+) = protoporphyrinogen IX + 2 CO2 + 2 H2O. The protein operates within porphyrin-containing compound metabolism; protoporphyrin-IX biosynthesis; protoporphyrinogen-IX from coproporphyrinogen-III (O2 route): step 1/1. Its function is as follows. Involved in the heme biosynthesis. Catalyzes the aerobic oxidative decarboxylation of propionate groups of rings A and B of coproporphyrinogen-III to yield the vinyl groups in protoporphyrinogen-IX. In Pseudomonas aeruginosa (strain UCBPP-PA14), this protein is Oxygen-dependent coproporphyrinogen-III oxidase.